Reading from the N-terminus, the 329-residue chain is DNA-directed RNA polymerase subunit alpha (329 aa).

Residues 1–235 (MQGSVTEFLK…EQLDAFVDLR (235 aa)) are alpha N-terminal domain (alpha-NTD). The segment at 249–329 (FDPILLRPVD…NWPPASIAED (81 aa)) is alpha C-terminal domain (alpha-CTD).

Belongs to the RNA polymerase alpha chain family. Homodimer. The RNAP catalytic core consists of 2 alpha, 1 beta, 1 beta' and 1 omega subunit. When a sigma factor is associated with the core the holoenzyme is formed, which can initiate transcription.

It catalyses the reaction RNA(n) + a ribonucleoside 5'-triphosphate = RNA(n+1) + diphosphate. Functionally, DNA-dependent RNA polymerase catalyzes the transcription of DNA into RNA using the four ribonucleoside triphosphates as substrates. This is DNA-directed RNA polymerase subunit alpha from Mannheimia succiniciproducens (strain KCTC 0769BP / MBEL55E).